Here is a 339-residue protein sequence, read N- to C-terminus: Adenosine deaminase (339 aa).

Histidine 15 and histidine 17 together coordinate Zn(2+). Substrate is bound by residues histidine 17, aspartate 19, and glycine 172. Histidine 199 is a Zn(2+) binding site. Glutamate 202 acts as the Proton donor in catalysis. Residue aspartate 279 coordinates Zn(2+).

This sequence belongs to the metallo-dependent hydrolases superfamily. Adenosine and AMP deaminases family. Adenosine deaminase subfamily. Requires Zn(2+) as cofactor.

It catalyses the reaction adenosine + H2O + H(+) = inosine + NH4(+). The enzyme catalyses 2'-deoxyadenosine + H2O + H(+) = 2'-deoxyinosine + NH4(+). Catalyzes the hydrolytic deamination of adenosine and 2-deoxyadenosine. The sequence is that of Adenosine deaminase from Lacticaseibacillus casei (strain BL23) (Lactobacillus casei).